A 1162-amino-acid polypeptide reads, in one-letter code: Isoleucine--tRNA ligase (1162 aa).

Positions 50–60 match the 'HIGH' region motif; the sequence is PSANGMPGIHH. The short motif at 710–714 is the 'KMSKS' region element; it reads KMSKR. Lys713 is a binding site for ATP.

This sequence belongs to the class-I aminoacyl-tRNA synthetase family. IleS type 2 subfamily. Monomer. Requires Zn(2+) as cofactor.

It localises to the cytoplasm. It catalyses the reaction tRNA(Ile) + L-isoleucine + ATP = L-isoleucyl-tRNA(Ile) + AMP + diphosphate. Functionally, catalyzes the attachment of isoleucine to tRNA(Ile). As IleRS can inadvertently accommodate and process structurally similar amino acids such as valine, to avoid such errors it has two additional distinct tRNA(Ile)-dependent editing activities. One activity is designated as 'pretransfer' editing and involves the hydrolysis of activated Val-AMP. The other activity is designated 'posttransfer' editing and involves deacylation of mischarged Val-tRNA(Ile). This chain is Isoleucine--tRNA ligase, found in Bacteroides thetaiotaomicron (strain ATCC 29148 / DSM 2079 / JCM 5827 / CCUG 10774 / NCTC 10582 / VPI-5482 / E50).